Here is a 312-residue protein sequence, read N- to C-terminus: Protoheme IX farnesyltransferase (312 aa).

8 helical membrane passes run 33 to 53 (VMLL…VSIN), 54 to 74 (PLYG…AGAL), 105 to 125 (FIFG…FVNW), 126 to 146 (FAAL…TIWL), 154 to 174 (IVIG…AATG), 181 to 201 (FLLF…LSLF), 243 to 263 (IIGF…IIFI), and 291 to 311 (FYLA…CFII).

It belongs to the UbiA prenyltransferase family. Protoheme IX farnesyltransferase subfamily.

It localises to the cell inner membrane. It catalyses the reaction heme b + (2E,6E)-farnesyl diphosphate + H2O = Fe(II)-heme o + diphosphate. The protein operates within porphyrin-containing compound metabolism; heme O biosynthesis; heme O from protoheme: step 1/1. Converts heme B (protoheme IX) to heme O by substitution of the vinyl group on carbon 2 of heme B porphyrin ring with a hydroxyethyl farnesyl side group. This Bartonella henselae (strain ATCC 49882 / DSM 28221 / CCUG 30454 / Houston 1) (Rochalimaea henselae) protein is Protoheme IX farnesyltransferase.